Consider the following 368-residue polypeptide: Chaperone protein DnaJ (368 aa).

The J domain occupies 5–70 (DYYQVLGVPR…KKRKLYDTHG (66 aa)). The CR-type zinc-finger motif lies at 124-201 (GVERQIQIPT…CNGAGRVEDH (78 aa)). The Zn(2+) site is built by Cys-137, Cys-140, Cys-153, Cys-156, Cys-175, Cys-178, Cys-189, and Cys-192. CXXCXGXG motif repeat units lie at residues 137–144 (CTHCHGSG), 153–160 (CGTCRGSG), 175–182 (CPHCGGRG), and 189–196 (CKVCNGAG).

Belongs to the DnaJ family. Homodimer. It depends on Zn(2+) as a cofactor.

The protein resides in the cytoplasm. In terms of biological role, participates actively in the response to hyperosmotic and heat shock by preventing the aggregation of stress-denatured proteins and by disaggregating proteins, also in an autonomous, DnaK-independent fashion. Unfolded proteins bind initially to DnaJ; upon interaction with the DnaJ-bound protein, DnaK hydrolyzes its bound ATP, resulting in the formation of a stable complex. GrpE releases ADP from DnaK; ATP binding to DnaK triggers the release of the substrate protein, thus completing the reaction cycle. Several rounds of ATP-dependent interactions between DnaJ, DnaK and GrpE are required for fully efficient folding. Also involved, together with DnaK and GrpE, in the DNA replication of plasmids through activation of initiation proteins. The sequence is that of Chaperone protein DnaJ from Xylella fastidiosa (strain 9a5c).